Here is a 781-residue protein sequence, read N- to C-terminus: DEAD-box ATP-dependent RNA helicase 50 (781 aa).

Disordered regions lie at residues 72 to 103 (EFAPPPSSDLLSSIPSESARRNGSRSRGLTAS), 117 to 148 (GKVTQKKQHMSHNEEEDEDDASDENYSADEGF), 166 to 240 (IPRS…KGDR), 254 to 292 (GRAIDEVSNPRKFNDNERAESRSSYSRDSSANSRGREDR), and 313 to 342 (YNPRRFTDNERGLRGGSHSKGSDTNSRGWG). Over residues 79 to 88 (SDLLSSIPSE) the composition is skewed to low complexity. Residues 130–143 (EEEDEDDASDENYS) show a composition bias toward acidic residues. Residues 171–197 (KSAERNEVKRASKVRESRESRRDLDRL) show a composition bias toward basic and acidic residues. The span at 198–208 (EGDDEDVDEVS) shows a compositional bias: acidic residues. The span at 216 to 226 (NQRAGSRSSYS) shows a compositional bias: polar residues. Over residues 254 to 274 (GRAIDEVSNPRKFNDNERAES) the composition is skewed to basic and acidic residues. Over residues 275–286 (RSSYSRDSSANS) the composition is skewed to low complexity. A compositionally biased stretch (basic and acidic residues) spans 313–325 (YNPRRFTDNERGL). The Q motif signature appears at 374–402 (KTFAEIGCSEDMMKALKEQNFDRPAHIQA). Residues 405–586 (FSPVIDGKSC…VEVFPDCEVV (182 aa)) form the Helicase ATP-binding domain. 418 to 425 (DQSGSGKT) is a binding site for ATP. The short motif at 533 to 536 (DEVD) is the DEAD box element. The 161-residue stretch at 621 to 781 (NKKTALLQIM…DVPNAYEFTT (161 aa)) folds into the Helicase C-terminal domain.

This sequence belongs to the DEAD box helicase family.

The catalysed reaction is ATP + H2O = ADP + phosphate + H(+). Probably involved in resistance to biotic and abiotic stresses. The protein is DEAD-box ATP-dependent RNA helicase 50 (RH50) of Arabidopsis thaliana (Mouse-ear cress).